Reading from the N-terminus, the 227-residue chain is Large ribosomal subunit protein uL3 (227 aa).

Q158 is subject to N5-methylglutamine.

The protein belongs to the universal ribosomal protein uL3 family. As to quaternary structure, part of the 50S ribosomal subunit. Forms a cluster with proteins L14 and L19. In terms of processing, methylated by PrmB.

One of the primary rRNA binding proteins, it binds directly near the 3'-end of the 23S rRNA, where it nucleates assembly of the 50S subunit. The sequence is that of Large ribosomal subunit protein uL3 from Polaromonas sp. (strain JS666 / ATCC BAA-500).